We begin with the raw amino-acid sequence, 494 residues long: Glutamate--tRNA ligase (494 aa).

A 'HIGH' region motif is present at residues 9-19; sequence PSPTGDPHVGT. The 'KMSKS' region signature appears at 250–254; sequence KLSKR. K253 provides a ligand contact to ATP.

The protein belongs to the class-I aminoacyl-tRNA synthetase family. Glutamate--tRNA ligase type 1 subfamily. Monomer.

The protein localises to the cytoplasm. It carries out the reaction tRNA(Glu) + L-glutamate + ATP = L-glutamyl-tRNA(Glu) + AMP + diphosphate. Its function is as follows. Catalyzes the attachment of glutamate to tRNA(Glu) in a two-step reaction: glutamate is first activated by ATP to form Glu-AMP and then transferred to the acceptor end of tRNA(Glu). The protein is Glutamate--tRNA ligase of Alcanivorax borkumensis (strain ATCC 700651 / DSM 11573 / NCIMB 13689 / SK2).